Here is a 219-residue protein sequence, read N- to C-terminus: Translation initiation factor 6 (219 aa).

This sequence belongs to the eIF-6 family.

Functionally, binds to the 50S ribosomal subunit and prevents its association with the 30S ribosomal subunit to form the 70S initiation complex. The sequence is that of Translation initiation factor 6 from Methanosarcina mazei (strain ATCC BAA-159 / DSM 3647 / Goe1 / Go1 / JCM 11833 / OCM 88) (Methanosarcina frisia).